Here is a 277-residue protein sequence, read N- to C-terminus: Proteasome subunit beta type-7 (277 aa).

The propeptide at 1–43 (MAAVSVFQPPVGGFSFDNCRRNAVLEADFAKKGFKLPKARKTG) is removed in mature form. The active-site Nucleophile is the Thr44.

Belongs to the peptidase T1B family. The 26S proteasome consists of a 20S proteasome core and two 19S regulatory subunits. The 20S proteasome core is a barrel-shaped complex made of 28 subunits that are arranged in four stacked rings. The two outer rings are each formed by seven alpha subunits, and the two inner rings are formed by seven beta subunits. The proteolytic activity is exerted by three beta-subunits PSMB5, PSMB6 and PSMB7.

It is found in the cytoplasm. It localises to the nucleus. The enzyme catalyses Cleavage of peptide bonds with very broad specificity.. Its function is as follows. Component of the 20S core proteasome complex involved in the proteolytic degradation of most intracellular proteins. This complex plays numerous essential roles within the cell by associating with different regulatory particles. Associated with two 19S regulatory particles, forms the 26S proteasome and thus participates in the ATP-dependent degradation of ubiquitinated proteins. The 26S proteasome plays a key role in the maintenance of protein homeostasis by removing misfolded or damaged proteins that could impair cellular functions, and by removing proteins whose functions are no longer required. Associated with the PA200 or PA28, the 20S proteasome mediates ubiquitin-independent protein degradation. This type of proteolysis is required in several pathways including spermatogenesis (20S-PA200 complex) or generation of a subset of MHC class I-presented antigenic peptides (20S-PA28 complex). Within the 20S core complex, PSMB7 displays a trypsin-like activity. The polypeptide is Proteasome subunit beta type-7 (Psmb7) (Mus musculus (Mouse)).